A 260-amino-acid polypeptide reads, in one-letter code: Acyl-coenzyme A diphosphatase FITM2 (260 aa).

Topologically, residues 1–23 (MERLENCAQMFQRRFLNESFRRH) are cytoplasmic. Residues 24–44 (CPVLLACIVLGGSLLKELCPL) traverse the membrane as a helical segment. Residues 45–57 (PDSYWNNKRNVLN) are Lumenal-facing. A helical membrane pass occupies residues 58 to 78 (VYFVKFSWGWTLWLLLPFIAL). Over 79–93 (TNYKLTRSTTKVLRR) the chain is Cytoplasmic. Residues 94–114 (LSSLLVSTLIWYLCTNLFLYI) traverse the membrane as a helical segment. Residues 115-145 (ENITGSCYESEAMSDPKEHQDRRECRLHSGY) are Lumenal-facing. Residues 146–166 (WHGFDISGHCFLLSYCILLIL) traverse the membrane as a helical segment. The active site involves H154. The Cytoplasmic segment spans residues 167–189 (EETSIISNIRFERHWHRMAINAQ). The next 2 helical transmembrane spans lie at 190–210 (FAALSILVIIWVWMFLCTAVY) and 211–231 (FHNIFQKVIGTAFGILAWYIT). The active site involves H212. Residues 232-260 (YRWWYLQPISPGLPPASASRSGKEPIYRN) lie on the Cytoplasmic side of the membrane.

This sequence belongs to the FIT family. FIT2 subfamily.

The protein localises to the endoplasmic reticulum membrane. It catalyses the reaction an acyl-CoA + H2O = an acyl-4'-phosphopantetheine + adenosine 3',5'-bisphosphate + 2 H(+). In terms of biological role, fatty acyl-coenzyme A (CoA) diphosphatase that hydrolyzes fatty acyl-CoA to yield acyl-4'-phosphopantetheine and adenosine 3',5'-bisphosphate. Preferentially hydrolyzes unsaturated long-chain acyl-CoA substrates in the endoplasmic reticulum (ER) lumen. This catalytic activity is required for maintaining ER structure and for lipid droplets (LDs) biogenesis, which are lipid storage organelles involved in maintaining lipid and energy homeostasis. May directly bind to diacylglycerol (DAGs) and triacylglycerol, which is also important for LD biogenesis. May support directional budding of nacent LDs from the ER into the cytosol by reducing DAG levels at sites of LD formation. May play a role in the regulation of cell morphology, ER morphology and cytoskeletal organization. This is Acyl-coenzyme A diphosphatase FITM2 from Xenopus tropicalis (Western clawed frog).